A 249-amino-acid chain; its full sequence is Adenosylcobinamide-GDP ribazoletransferase (249 aa).

The next 6 membrane-spanning stretches (helical) occupy residues 32 to 52 (MVAF…TWFG), 53 to 73 (ATWL…WGAI), 107 to 127 (IGTM…LFVL), 136 to 156 (ALIV…FWFP), 190 to 210 (LLWW…IIIA), and 224 to 244 (TYGA…AALV).

The protein belongs to the CobS family. The cofactor is Mg(2+).

The protein localises to the cell membrane. The enzyme catalyses alpha-ribazole + adenosylcob(III)inamide-GDP = adenosylcob(III)alamin + GMP + H(+). It catalyses the reaction alpha-ribazole 5'-phosphate + adenosylcob(III)inamide-GDP = adenosylcob(III)alamin 5'-phosphate + GMP + H(+). The protein operates within cofactor biosynthesis; adenosylcobalamin biosynthesis; adenosylcobalamin from cob(II)yrinate a,c-diamide: step 7/7. Its function is as follows. Joins adenosylcobinamide-GDP and alpha-ribazole to generate adenosylcobalamin (Ado-cobalamin). Also synthesizes adenosylcobalamin 5'-phosphate from adenosylcobinamide-GDP and alpha-ribazole 5'-phosphate. The chain is Adenosylcobinamide-GDP ribazoletransferase from Herpetosiphon aurantiacus (strain ATCC 23779 / DSM 785 / 114-95).